The following is a 201-amino-acid chain: Adenylyl-sulfate kinase (201 aa).

35–42 (GLSGSGKS) is an ATP binding site. Catalysis depends on serine 109, which acts as the Phosphoserine intermediate.

Belongs to the APS kinase family.

The enzyme catalyses adenosine 5'-phosphosulfate + ATP = 3'-phosphoadenylyl sulfate + ADP + H(+). The protein operates within sulfur metabolism; hydrogen sulfide biosynthesis; sulfite from sulfate: step 2/3. Catalyzes the synthesis of activated sulfate. This is Adenylyl-sulfate kinase from Salmonella gallinarum (strain 287/91 / NCTC 13346).